Reading from the N-terminus, the 632-residue chain is 1-deoxy-D-xylulose-5-phosphate synthase (632 aa).

Residues histidine 77 and 118 to 120 (GHA) each bind thiamine diphosphate. Aspartate 149 is a Mg(2+) binding site. Residues 150–151 (GS), asparagine 178, phenylalanine 287, and glutamate 372 each bind thiamine diphosphate. Asparagine 178 is a binding site for Mg(2+).

This sequence belongs to the transketolase family. DXPS subfamily. In terms of assembly, homodimer. Mg(2+) serves as cofactor. It depends on thiamine diphosphate as a cofactor.

The enzyme catalyses D-glyceraldehyde 3-phosphate + pyruvate + H(+) = 1-deoxy-D-xylulose 5-phosphate + CO2. The protein operates within metabolic intermediate biosynthesis; 1-deoxy-D-xylulose 5-phosphate biosynthesis; 1-deoxy-D-xylulose 5-phosphate from D-glyceraldehyde 3-phosphate and pyruvate: step 1/1. Its function is as follows. Catalyzes the acyloin condensation reaction between C atoms 2 and 3 of pyruvate and glyceraldehyde 3-phosphate to yield 1-deoxy-D-xylulose-5-phosphate (DXP). This Chlorobium luteolum (strain DSM 273 / BCRC 81028 / 2530) (Pelodictyon luteolum) protein is 1-deoxy-D-xylulose-5-phosphate synthase.